The sequence spans 173 residues: Alpha-crystallin A chain (173 aa).

The residue at position 1 (M1) is an N-acetylmethionine. Positions 1 to 63 are required for complex formation with BFSP1 and BFSP2; sequence MDIAIQQPWF…RTVLDSGVSE (63 aa). Q6 bears the Deamidated glutamine; partial mark. Position 45 is a phosphoserine (S45). A Deamidated glutamine; partial modification is found at Q50. Positions 52 to 162 constitute a sHSP domain; that stretch reads LFRTVLDSGV…GHSERAIPVS (111 aa). Residues K70 and K99 each carry the N6-acetyllysine modification. A Zn(2+)-binding site is contributed by H100. N101 bears the Deamidated asparagine; partial mark. E102 and H107 together coordinate Zn(2+). Residue S122 is modified to Phosphoserine. At N123 the chain carries Deamidated asparagine; partial. Positions 144-173 are disordered; that stretch reads PKVPSGVDAGHSERAIPVSREEKPSSAPSS. Residues 153 to 167 are compositionally biased toward basic and acidic residues; the sequence is GHSERAIPVSREEKP. Residue H154 participates in Zn(2+) binding. S162 carries an O-linked (GlcNAc) serine glycan.

This sequence belongs to the small heat shock protein (HSP20) family. Heteromer composed of three CRYAA and one CRYAB subunits. Inter-subunit bridging via zinc ions enhances stability, which is crucial as there is no protein turn over in the lens. Can also form homodimers and homotetramers (dimers of dimers) which serve as the building blocks of homooligomers. Within homooligomers, the zinc-binding motif is created from residues of 3 different molecules. His-100 and Glu-102 from one molecule are ligands of the zinc ion, and His-107 and His-154 residues from additional molecules complete the site with tetrahedral coordination geometry. Part of a complex required for lens intermediate filament formation composed of BFSP1, BFSP2 and CRYAA. Acetylation at Lys-70 may increase chaperone activity. Post-translationally, undergoes age-dependent proteolytical cleavage at the C-terminus.

It localises to the cytoplasm. Its subcellular location is the nucleus. Its function is as follows. Contributes to the transparency and refractive index of the lens. Acts as a chaperone, preventing aggregation of various proteins under a wide range of stress conditions. Required for the correct formation of lens intermediate filaments as part of a complex composed of BFSP1, BFSP2 and CRYAA. This chain is Alpha-crystallin A chain (CRYAA), found in Neovison vison (American mink).